The primary structure comprises 357 residues: G-protein coupled receptor 183 (357 aa).

Residues 1 to 27 (MANNFTTPLATSHGNNCDLYAHHSTAR) are Extracellular-facing. Asparagine 4 is a glycosylation site (N-linked (GlcNAc...) asparagine). A helical membrane pass occupies residues 28 to 53 (VLMPLHYSLVFIIGLVGNLLALVVIV). The Cytoplasmic portion of the chain corresponds to 54–73 (QNRKKINSTTLYSMNLVISD). A helical membrane pass occupies residues 74–91 (ILFTTALPTRIAYYALGF). A 7alpha,25-dihydroxycholesterol-binding site is contributed by arginine 83. The Extracellular portion of the chain corresponds to 92–101 (DWRIGDALCR). Cysteine 100 and cysteine 177 form a disulfide bridge. Residues 102–123 (VTALVFYINTYAGVNFMTCLSI) form a helical membrane-spanning segment. 2 residues coordinate 7alpha,25-dihydroxycholesterol: tyrosine 108 and tyrosine 112. The interaction with G proteins stretch occupies residues 122–130 (SIDRFFAVV). Residues 124 to 145 (DRFFAVVHPLRYNKIKRIEYAK) are Cytoplasmic-facing. Residues 146–164 (GVCLSVWILVFAQTLPLLL) form a helical membrane-spanning segment. The Extracellular segment spans residues 165–188 (TPMSKEEGDKTTCMEYPNFEGTAS). Residues 189-211 (LPWILLGACLLGYVLPITVILLC) form a helical membrane-spanning segment. The Cytoplasmic segment spans residues 212 to 237 (YSQICCKLFRTAKQNPLTEKSGVNKK). A helical transmembrane segment spans residues 238 to 261 (ALNTIILIIVVFILCFTPYHVAII). Tyrosine 256 is a 7alpha,25-dihydroxycholesterol binding site. Residues 262 to 283 (QHMIKMLCSPGALECGARHSFQ) lie on the Extracellular side of the membrane. A helical transmembrane segment spans residues 284 to 308 (ISLHFTVCLMNFNCCMDPFIYFFAC). Residues 309-357 (KGYKRKVMKMLKRQVSVSISSAVRSAPEENSREMTESQMMIHSKASNGR) are Cytoplasmic-facing. 2 positions are modified to phosphoserine: serine 324 and serine 345. The interval 336-357 (EENSREMTESQMMIHSKASNGR) is disordered. Positions 344–357 (ESQMMIHSKASNGR) are enriched in polar residues.

Belongs to the G-protein coupled receptor 1 family. Homodimer and heterodimer. Heterodimerizes with CXCR5; leading to modulate the interaction between of CXCL13 and CXCR5. As to expression, expressed in mature B-cells and increases in expression early after activation, before being down-regulated in germinal center B-cells. Expressed in astrocytes. Specifically expressed in CD4(+) dendritic cells but not in CD8(+) dendritic cells. Expressed in monocyte/osteoclasts precursors and mature osteoclasts.

Its subcellular location is the cell membrane. Functionally, G-protein coupled receptor expressed in lymphocytes that acts as a chemotactic receptor for B-cells, T-cells, splenic dendritic cells, monocytes/macrophages and astrocytes. Receptor for oxysterol 7-alpha,25-dihydroxycholesterol (7-alpha,25-OHC) and other related oxysterols. Mediates cell positioning and movement of a number of cells by binding the 7-alpha,25-OHC ligand that forms a chemotactic gradient. Binding of 7-alpha,25-OHC mediates the correct localization of B-cells during humoral immune responses. Collaborates with CXCR5 to mediate B-cell migration; probably by forming a heterodimer with CXCR5 that affects the interaction between of CXCL13 and CXCR5. Guides B-cell movement along the B-cell zone-T-cell zone boundary and later to interfollicular and outer follicular regions. Its specific expression during B-cell maturation helps position B-cells appropriately for mounting T-dependent antibody responses. Also acts as a chemotactic receptor for some T-cells upon binding to 7-alpha,25-OHC ligand. Promotes follicular helper T (Tfh) cells differentiation by positioning activated T-cells at the follicle-T-zone interface, promoting contact of newly activated CD4 T-cells with activated dendritic cells and exposing them to Tfh-cell-promoting inducible costimulator (ICOS) ligand. Expression in splenic dendritic cells is required for their homeostasis, localization and ability to induce B- and T-cell responses: GPR183 acts as a chemotactic receptor in dendritic cells that mediates the accumulation of CD4(+) dendritic cells in bridging channels. Regulates migration of astrocytes and is involved in communication between astrocytes and macrophages. Promotes osteoclast precursor migration to bone surfaces. Signals constitutively through G(i)-alpha, but not G(s)-alpha or G(q)-alpha. Signals constitutively also via MAPK1/3 (ERK1/2). In Mus musculus (Mouse), this protein is G-protein coupled receptor 183.